We begin with the raw amino-acid sequence, 348 residues long: NADH-ubiquinone oxidoreductase chain 2 (348 aa).

A run of 9 helical transmembrane segments spans residues 1–21 (MSPY…TITA), 60–80 (FLTQ…NAWL), 96–116 (TLII…TWLP), 149–169 (NPTL…WGGL), 177–194 (ILAY…LILQ), 198–220 (TLTL…TFIL), 238–258 (ILTS…PLTG), 273–293 (DLAP…YFYL), and 328–348 (MAAS…LFNI).

It belongs to the complex I subunit 2 family.

Its subcellular location is the mitochondrion inner membrane. The catalysed reaction is a ubiquinone + NADH + 5 H(+)(in) = a ubiquinol + NAD(+) + 4 H(+)(out). Functionally, core subunit of the mitochondrial membrane respiratory chain NADH dehydrogenase (Complex I) that is believed to belong to the minimal assembly required for catalysis. Complex I functions in the transfer of electrons from NADH to the respiratory chain. The immediate electron acceptor for the enzyme is believed to be ubiquinone. This chain is NADH-ubiquinone oxidoreductase chain 2 (MT-ND2), found in Tetraodon nigroviridis (Spotted green pufferfish).